The chain runs to 382 residues: Ribosomal RNA large subunit methyltransferase G (382 aa).

This sequence belongs to the methyltransferase superfamily. RlmG family.

The protein resides in the cytoplasm. It catalyses the reaction guanosine(1835) in 23S rRNA + S-adenosyl-L-methionine = N(2)-methylguanosine(1835) in 23S rRNA + S-adenosyl-L-homocysteine + H(+). Functionally, specifically methylates the guanine in position 1835 (m2G1835) of 23S rRNA. This chain is Ribosomal RNA large subunit methyltransferase G, found in Aliivibrio fischeri (strain ATCC 700601 / ES114) (Vibrio fischeri).